We begin with the raw amino-acid sequence, 404 residues long: Phosphoglycerate kinase (404 aa).

Substrate is bound by residues 22–24, Arg-37, 60–63, Arg-119, and Arg-156; these read DLN and HLGR. Residues Lys-206, Gly-302, Glu-333, and 359–362 each bind ATP; that span reads GGDS.

This sequence belongs to the phosphoglycerate kinase family. Monomer.

It localises to the cytoplasm. The enzyme catalyses (2R)-3-phosphoglycerate + ATP = (2R)-3-phospho-glyceroyl phosphate + ADP. Its pathway is carbohydrate degradation; glycolysis; pyruvate from D-glyceraldehyde 3-phosphate: step 2/5. The sequence is that of Phosphoglycerate kinase from Clavibacter sepedonicus (Clavibacter michiganensis subsp. sepedonicus).